Consider the following 183-residue polypeptide: ARS-binding factor 2, mitochondrial (183 aa).

Residues 1 to 26 (MNSYSLLTRSFHESSKPLFNLASTLL) constitute a mitochondrion transit peptide. 2 DNA-binding regions (HMG box) span residues 43-111 (PKRP…KEFD) and 116-183 (PKKP…YPLN).

The protein resides in the mitochondrion. It localises to the nucleus. Its function is as follows. Specific binding to the autonomously replicating sequence 1 (ARS1). Interaction with regulatory regions: probably involved in compacting the mitochondrial genome. It might play a positive role in gene expression and replication. This Saccharomyces cerevisiae (strain ATCC 204508 / S288c) (Baker's yeast) protein is ARS-binding factor 2, mitochondrial (ABF2).